Consider the following 308-residue polypeptide: uncharacterized protein (308 aa).

This is an uncharacterized protein from Escherichia coli (Bacteriophage T4).